The chain runs to 397 residues: Phosphoglycerate kinase (397 aa).

Substrate contacts are provided by residues 26-28 (DLN), arginine 42, 65-68 (HLGR), arginine 119, and arginine 152. ATP-binding positions include lysine 203, glutamate 325, and 351 to 354 (GGDT).

This sequence belongs to the phosphoglycerate kinase family. Monomer.

Its subcellular location is the cytoplasm. The enzyme catalyses (2R)-3-phosphoglycerate + ATP = (2R)-3-phospho-glyceroyl phosphate + ADP. It participates in carbohydrate degradation; glycolysis; pyruvate from D-glyceraldehyde 3-phosphate: step 2/5. The sequence is that of Phosphoglycerate kinase from Bordetella bronchiseptica (strain ATCC BAA-588 / NCTC 13252 / RB50) (Alcaligenes bronchisepticus).